Reading from the N-terminus, the 308-residue chain is Ribonuclease Z (308 aa).

Positions 63, 65, 67, 68, 140, 211, and 269 each coordinate Zn(2+). The Proton acceptor role is filled by Asp-67.

This sequence belongs to the RNase Z family. In terms of assembly, homodimer. It depends on Zn(2+) as a cofactor.

The enzyme catalyses Endonucleolytic cleavage of RNA, removing extra 3' nucleotides from tRNA precursor, generating 3' termini of tRNAs. A 3'-hydroxy group is left at the tRNA terminus and a 5'-phosphoryl group is left at the trailer molecule.. Zinc phosphodiesterase, which displays some tRNA 3'-processing endonuclease activity. Probably involved in tRNA maturation, by removing a 3'-trailer from precursor tRNA. This Bacillus velezensis (strain DSM 23117 / BGSC 10A6 / LMG 26770 / FZB42) (Bacillus amyloliquefaciens subsp. plantarum) protein is Ribonuclease Z.